Reading from the N-terminus, the 323-residue chain is Probable cell division protein WhiA (323 aa).

The segment at residues 275–309 is a DNA-binding region (H-T-H motif); the sequence is TLKELGEMLTTGQVSKSGINHRLRKLDQIAERLRS.

The protein belongs to the WhiA family.

Functionally, involved in cell division and chromosome segregation. This is Probable cell division protein WhiA from Listeria monocytogenes serotype 4b (strain CLIP80459).